Here is a 142-residue protein sequence, read N- to C-terminus: U1 small nuclear ribonucleoprotein C (142 aa).

The segment at 4-36 (YYCDYCDTFLTHDSPSVRKTHNGGRKHKDNVRM) adopts a Matrin-type zinc-finger fold.

It belongs to the U1 small nuclear ribonucleoprotein C family. In terms of assembly, U1 snRNP is composed of the 7 core Sm proteins B/B', D1, D2, D3, E, F and G that assemble in a heptameric protein ring on the Sm site of the small nuclear RNA to form the core snRNP, and at least 3 U1 snRNP-specific proteins U1-70K, U1-A and U1-C. U1-C interacts with U1 snRNA and the 5' splice-site region of the pre-mRNA.

It localises to the nucleus. In terms of biological role, component of the spliceosomal U1 snRNP, which is essential for recognition of the pre-mRNA 5' splice-site and the subsequent assembly of the spliceosome. U1-C is directly involved in initial 5' splice-site recognition for both constitutive and regulated alternative splicing. The interaction with the 5' splice-site seems to precede base-pairing between the pre-mRNA and the U1 snRNA. Stimulates commitment or early (E) complex formation by stabilizing the base pairing of the 5' end of the U1 snRNA and the 5' splice-site region. The sequence is that of U1 small nuclear ribonucleoprotein C from Caenorhabditis elegans.